The sequence spans 139 residues: Acidic phospholipase A2 5 (139 aa).

A signal peptide spans Met-1–Gly-16. 7 disulfides stabilise this stretch: Cys-42–Cys-131, Cys-44–Cys-60, Cys-59–Cys-111, Cys-65–Cys-139, Cys-66–Cys-104, Cys-73–Cys-97, and Cys-91–Cys-102. 3 residues coordinate Ca(2+): Tyr-43, Gly-45, and Gly-47. His-63 is a catalytic residue. Asp-64 lines the Ca(2+) pocket. Asp-105 is a catalytic residue.

The protein belongs to the phospholipase A2 family. Group II subfamily. D49 sub-subfamily. Requires Ca(2+) as cofactor. In terms of tissue distribution, expressed by the venom gland.

It is found in the secreted. It carries out the reaction a 1,2-diacyl-sn-glycero-3-phosphocholine + H2O = a 1-acyl-sn-glycero-3-phosphocholine + a fatty acid + H(+). Functionally, PLA2 catalyzes the calcium-dependent hydrolysis of the 2-acyl groups in 3-sn-phosphoglycerides. The protein is Acidic phospholipase A2 5 of Echis pyramidum leakeyi (Leakey's carpet viper).